Here is a 203-residue protein sequence, read N- to C-terminus: Methyltransferase-like 26 (203 aa).

Belongs to the UPF0585 family.

The chain is Methyltransferase-like 26 from Xenopus tropicalis (Western clawed frog).